The sequence spans 141 residues: Zinc finger protein 593 homolog (141 aa).

Residues 1-32 (MGRYSGHGGTHTKKKQYKRARSTKNRAKDIDQ) form a disordered region. A compositionally biased stretch (basic residues) spans 10–25 (THTKKKQYKRARSTKN). Residues 60–84 (NYCIHCSKHFVTNEDLQSHIKGKPH) form a C2H2-type zinc finger.

The protein belongs to the ZNF593/BUD20 C2H2-type zinc-finger protein family. As to quaternary structure, associates with pre-60S ribosomal particles; released from the pre-60S particle very early in the cytoplasm.

It is found in the nucleus. Its subcellular location is the cytoplasm. Involved in pre-60S ribosomal particles maturation by promoting the nuclear export of the 60S ribosome. This chain is Zinc finger protein 593 homolog, found in Dictyostelium discoideum (Social amoeba).